The primary structure comprises 245 residues: 14-3-3 protein zeta/delta (245 aa).

At Met-1 the chain carries N-acetylmethionine. N6-acetyllysine is present on Lys-3. Residue Ser-58 is modified to Phosphoserine; by PKA. Lys-68 carries the post-translational modification N6-acetyllysine. Residues Ser-184, Ser-207, and Ser-210 each carry the phosphoserine modification. Thr-232 carries the phosphothreonine; by CK1 modification.

This sequence belongs to the 14-3-3 family. As to quaternary structure, homodimer. Heterodimerizes with YWHAE. Homo- and heterodimerization is inhibited by phosphorylation on Ser-58. Interacts with FOXO4, NOXA1, SSH1 and ARHGEF2. Interacts with CDK16 and with WEE1 (C-terminal). Interacts with MLF1 (phosphorylated form); the interaction retains it in the cytoplasm. Interacts with BSPRY. Interacts with Thr-phosphorylated ITGB2. Interacts with Pseudomonas aeruginosa exoS (unphosphorylated form). Interacts with BAX; the interaction occurs in the cytoplasm. Under stress conditions, MAPK8-mediated phosphorylation releases BAX to mitochondria. Interacts with phosphorylated RAF1; the interaction is inhibited when YWHAZ is phosphorylated on Thr-232. Interacts with TP53; the interaction enhances p53 transcriptional activity. The Ser-58 phosphorylated form inhibits this interaction and p53 transcriptional activity. Interacts with ABL1 (phosphorylated form); the interaction retains ABL1 in the cytoplasm. Interacts with PKA-phosphorylated AANAT; the interaction modulates AANAT enzymatic activity by increasing affinity for arylalkylamines and acetyl-CoA and protecting the enzyme from dephosphorylation and proteasomal degradation. It may also prevent thiol-dependent inactivation. Interacts with AKT1; the interaction phosphorylates YWHAZ and modulates dimerization. Interacts with GAB2. Interacts with SAMSN1. Interacts with BCL2L11 and TLK2. Interacts with the 'Thr-369' phosphorylated form of DAPK2. Interacts with PI4KB, TBC1D22A and TBC1D22B. Interacts with ZFP36L1 (via phosphorylated form); this interaction occurs in a p38 MAPK- and AKT-signaling pathways. Interacts with SLITRK1. Interacts with AK5, LDB1, MADD, PDE1A and SMARCB1. Interacts with ARHGEF7 and GIT1. Interacts with MEFV. Interacts with ADAM22 (via C-terminus). In terms of processing, the delta, brain-specific form differs from the zeta form in being phosphorylated. Phosphorylation on Ser-184 by MAPK8; promotes dissociation of BAX and translocation of BAX to mitochondria. Phosphorylation on Thr-232; inhibits binding of RAF1. Phosphorylated on Ser-58 by PKA and protein kinase C delta type catalytic subunit in a sphingosine-dependent fashion. Phosphorylation on Ser-58 by PKA; disrupts homodimerization and heterodimerization with YHAE and TP53.

It is found in the cytoplasm. The protein resides in the melanosome. Functionally, adapter protein implicated in the regulation of a large spectrum of both general and specialized signaling pathways. Binds to a large number of partners, usually by recognition of a phosphoserine or phosphothreonine motif. Binding generally results in the modulation of the activity of the binding partner. Promotes cytosolic retention and inactivation of TFEB transcription factor by binding to phosphorylated TFEB. Induces ARHGEF7 activity on RAC1 as well as lamellipodia and membrane ruffle formation. In neurons, regulates spine maturation through the modulation of ARHGEF7 activity. The chain is 14-3-3 protein zeta/delta (Ywhaz) from Mus musculus (Mouse).